A 522-amino-acid polypeptide reads, in one-letter code: Kelch domain-containing protein 4 (522 aa).

A compositionally biased stretch (basic residues) spans 1 to 10 (MGKKGKKEKK). Residues 1-33 (MGKKGKKEKKGRGAEKTAAKMEKKVSKRSRKEE) are disordered. Basic and acidic residues predominate over residues 11–24 (GRGAEKTAAKMEKK). Kelch repeat units follow at residues 77 to 129 (ELIL…VVPQ), 133 to 187 (QLWV…AWKR), 188 to 241 (QLIL…VTPQ), 243 to 289 (GIII…MNPS), and 308 to 361 (QTLF…RRGR). 3 disordered regions span residues 346–378 (QLKG…GAGT), 402–432 (LAAP…PCPR), and 481–522 (DPET…GAED). 2 positions are modified to phosphoserine: serine 413 and serine 418. One copy of the Kelch 6 repeat lies at 443 to 494 (VLYVYGGMFEAGDRQVTLSDLHCLDLHRMEAWKALVEMDPETQEWLEETDSE).

In Pongo abelii (Sumatran orangutan), this protein is Kelch domain-containing protein 4 (KLHDC4).